A 201-amino-acid polypeptide reads, in one-letter code: Regulator of G-protein signaling 1 (201 aa).

One can recognise an RGS domain in the interval 75 to 191 (SLEKLLVSEE…LKSEIFFRLA (117 aa)).

It localises to the cell membrane. The protein resides in the cytoplasm. Its subcellular location is the cytosol. In terms of biological role, regulates G protein-coupled receptor signaling cascades, including signaling downstream of the N-formylpeptide chemoattractant receptors and leukotriene receptors. Inhibits B cell chemotaxis. Inhibits signal transduction by increasing the GTPase activity of G protein alpha subunits, thereby driving them into their inactive GDP-bound form. The sequence is that of Regulator of G-protein signaling 1 (rgs1) from Xenopus laevis (African clawed frog).